Consider the following 407-residue polypeptide: Homeobox even-skipped homolog protein 1 (407 aa).

Disordered regions lie at residues 29-120 (EAVG…SDFY) and 137-179 (EYQH…ACSA). Residues 102–114 (DSLSGQGQPSSSD) show a composition bias toward polar residues. The segment at residues 183–242 (MRRYRTAFTREQIARLEKEFYRENYVSRPRRCELAAALNLPETTIKVWFQNRRMKDKRQR) is a DNA-binding region (homeobox).

This sequence belongs to the even-skipped homeobox family.

The protein resides in the nucleus. Its function is as follows. May play a role in the specification of neuronal cell types. The sequence is that of Homeobox even-skipped homolog protein 1 (EVX1) from Homo sapiens (Human).